The sequence spans 235 residues: Regulator of G-protein signaling 18 (235 aa).

Residue S49 is modified to Phosphoserine. Positions 86–202 (SFDKLLSHRD…LKSDIYLDLM (117 aa)) constitute an RGS domain. S216 and S218 each carry phosphoserine.

As to expression, expressed in peripheral leukocytes, bone marrow, platelet, spleen and fetal liver.

The protein localises to the cytoplasm. Inhibits signal transduction by increasing the GTPase activity of G protein alpha subunits thereby driving them into their inactive GDP-bound form. Binds to G(i) alpha-1, G(i) alpha-2, G(i) alpha-3 and G(q) alpha. The protein is Regulator of G-protein signaling 18 (RGS18) of Homo sapiens (Human).